The primary structure comprises 582 residues: Urocanate reductase (582 aa).

A signal peptide spans 1-20 (MHYKKSIIGIAVTATAIIAG). Residue Cys-21 is the site of N-palmitoyl cysteine attachment. A lipid anchor (S-diacylglycerol cysteine) is attached at Cys-21. Position 93 is an FMN phosphoryl threonine (Thr-93). Residues Ala-143, Glu-162, Asn-170, Ser-171, Gly-175, Ala-176, Ala-285, and Asp-352 each contribute to the FAD site. Arg-411 functions as the Proton donor in the catalytic mechanism. His-521, Glu-550, and Ala-565 together coordinate FAD.

The protein belongs to the FAD-dependent oxidoreductase 2 family. FRD/SDH subfamily. FAD serves as cofactor. FMN is required as a cofactor.

Its subcellular location is the cell membrane. It catalyses the reaction dihydrourocanate + A = urocanate + AH2. In terms of biological role, catalyzes the two-electron reduction of urocanate to dihydrourocanate (also named imidazole propionate or deamino-histidine). The physiological electron donor is unknown; it might be the membrane-bound tetraheme cytochrome c (CymA). Enables anaerobic growth with urocanate as a sole terminal electron acceptor, and thus can provide the cells with a niche where no other bacteria can compete and survive. Is unable to reduce cinnamate and other unsaturated organic acids such as acrylic, crotonic, fumaric and orotic acids. Has no fumarate reductase or succinate dehydrogenase activity. The protein is Urocanate reductase (urdA) of Shewanella oneidensis (strain ATCC 700550 / JCM 31522 / CIP 106686 / LMG 19005 / NCIMB 14063 / MR-1).